We begin with the raw amino-acid sequence, 588 residues long: MACKVTGPNRHLTSVLEMSSFVYWPRSRQQAHNFPMQAVEQKLADATRTLHAKSSLQPSLSIETPKSKENDESGCESSNCMFHPHTIKSEPNFCFAREFKSVPDDFRIGGGDLQMGNNSKRLTCVIDTNRVDMAGILPDNMSFRGLPENKSLLVSAQIEVIPCKVCGDKSSGVHYGVITCEGCKGFFRRSQSSIVNYQCPRQKNCVVDRVNRNRCQYCRLKKCIELGMSRDAVKFGRMSKKQREKVEDEVRMHKELAANGLGYQAIYGDYSPPPSHPSYCFDQSMYGHYPSGTSTPVNGYSIAVAATPTTPMPQNMYGATPSSTNGTQYVAHQATGGSFPSPQVPEEDVATRVIRAFNQQHSSYTTQHGVCNVDPDCIPHLSRAGGWELFARELNPLIQAIIEFAKSIDGFMNLPQETQIQLLKGSVFELSLVFAAMYYNVDAQAVCGERYSVPFACLIAEDDAEMQLIVEVNNTLQEIVHLQPHQSELALLAAGLILEQVSSSHGIGILDTATIATAETLKNALYQSVMPRIGCMEDTIHRIQDVETRIRQTARLHQEALQNFRMSDPTSSEKLPALYKELFTADRP.

The segment at 50 to 73 (LHAKSSLQPSLSIETPKSKENDES) is disordered. Polar residues predominate over residues 52–64 (AKSSLQPSLSIET). A DNA-binding region (nuclear receptor) is located at residues 160–235 (VIPCKVCGDK…LGMSRDAVKF (76 aa)). 2 consecutive NR C4-type zinc fingers follow at residues 163 to 183 (CKVC…CEGC) and 199 to 223 (CPRQ…LKKC). In terms of domain architecture, NR LBD spans 345–586 (PEEDVATRVI…ALYKELFTAD (242 aa)).

Belongs to the nuclear hormone receptor family. NR1 subfamily. Expressed in the germline and oocytes and is a maternal gene product. In males and sperm-producing hermaphrodites, expressed in early pachytene spermatocytes, increasing in level throughout late pachytene. Expression is undetectable in meiotically dividing spermatocytes or mature spermatids.

The protein resides in the nucleus. Orphan nuclear receptor. Transcription factor. Modulates expression of target genes, such as Period protein homolog lin-42 and microRNA let-7, by binding to hormone response elements (HRE). Involved in promoting oscillatory expression of the primary transcripts of let-7 and paralogous microRNAs miR-48, miR-84, and miR-241. Plays a role in normal development and required to regulate each larval molt. Involved in regulating both the frequency and number of molts, acting as part of a negative feedback loop with the let-7 family of microRNAs, perhaps contributing to a self-sustaining molecular-genetic oscillator. Positively modulates expression of collagen and hedgehog-related genes. Involved in development of the gonad and associated epidermal structures. Required in spermatogenesis, acting following the sperm/oocyte cell fate decision, downstream of the canonical sex-determination pathway. Involved in regulating formation of the sperm-specific fibrous body-membranous organelle (FB-MO) complexes, acting independently of transcription regulator spe-44. This chain is Nuclear hormone receptor family member nhr-23, found in Caenorhabditis elegans.